Consider the following 917-residue polypeptide: MRLSSSSGSVLPAQAASPEAVEEQKCLNSELWHACAGPLVSLPAVGSRVVYFPQGHSEQVAASTNKEMESQIPNYPNLPPQLICQLHNVTMHADAETDEVYAQMTLQPLSPQELKDPYLPAELGSANKQPTNYFCKTLTASDTSTHGGFSVPRRAAEKVFPPLDFTQQPPAQELIAKDLHGNEWKFRHIFRGQPKRHLLTTGWSVFVSAKRLVAGDSVLFIWNDNNQLLLGIRRANRPQTVMPSSVLSSDSMHIGLLAAAAHAASTNSRFTIFYNPRASPSEFVIPLSKYVKAVYHTRISVGMRFRMLFETEESSVRRYMGTITGISDLDAARWPNSHWRSVKVGWDESTAGERQPRVSLWEIEPLTTFPMYPSPFPLRLKRPWPTGLPSLHGGKDDDLTSSLMWLRDSANPGFQSLNFGGLGMNPWMQPRFDASLLGLQPDMYQTIAATAFQDPTKQVSPTILQFQQPQNIGGRANTLLPSQILQQVQPQFQQQQYLQNINETTIQGHAQSEFLQQQLQRCQSFTEQKPQLQTQQQQQESQQQQQQQSQCMQVPQHQQMQQQKNMTNYQSVPNALSPFSQLSSPSQSSPMTLQTVLPFSQPQSYPDTSMSSLSPSNTSTMHNALRPFSSEAPSHLSMPRPTAVPVPDPWSSKRVAVESLLPSRPQVTSQMEQLDSTAPSIPQSSALAPLPGRGCLVDQDGNSDPQNHLLFGVNIDSQSLLMQGGIPSLQGENDSTAIPYSTSNFLSPSQNDFPLDQTLSSADCLDESGYVPCSQNSDQVINRPPATFVKVYKSGTYGRSLDITRFSSYHELRRELGRLFGLEGQLENPLRSGWQLVFVDREDDVLLVGDDPWQEFVNSVSCIKILSPQEVQQMGKPFELLSSAPGKRLGSSCDDYVSRQESRSLSTGIASVGSVEF.

The TF-B3 DNA-binding region spans 134 to 236 (FCKTLTASDT…QLLLGIRRAN (103 aa)). A disordered region spans residues 571–649 (SVPNALSPFS…RPTAVPVPDP (79 aa)). Composition is skewed to low complexity over residues 576 to 594 (LSPF…MTLQ) and 604 to 620 (SYPD…NTST). The PB1 domain maps to 786–870 (ATFVKVYKSG…SCIKILSPQE (85 aa)).

This sequence belongs to the ARF family. As to quaternary structure, homodimers and heterodimers. In terms of tissue distribution, expressed in roots, culms, leaves and young panicles.

It localises to the nucleus. Functionally, auxin response factors (ARFs) are transcriptional factors that bind specifically to the DNA sequence 5'-TGTCTC-3' found in the auxin-responsive promoter elements (AuxREs). The chain is Auxin response factor 17 (ARF17) from Oryza sativa subsp. japonica (Rice).